A 552-amino-acid polypeptide reads, in one-letter code: Leiomodin-2 (552 aa).

The interval 1–47 (MSTFGYRRELSKYEDIDEDELLASLTEEELKELERELEDIEPDRNLP) is interaction with tropomyosin alpha. Interaction with actin stretches follow at residues 1–169 (MSTF…SSHV) and 170–498 (RHKK…KEIK). Residues 13–46 (YEDIDEDELLASLTEEELKELERELEDIEPDRNL) are a coiled coil. 3 disordered regions span residues 33-67 (LERE…FSRE), 87-191 (GACE…DGKD), and 364-531 (MDKQ…DNLM). The segment covering 51 to 64 (RQKSLTEKTPTGTF) has biased composition (polar residues). A coiled-coil region spans residues 86-151 (LGACEKDSEQ…DDEDEEKQNS (66 aa)). Composition is skewed to acidic residues over residues 93–108 (SEQE…EECF) and 115–147 (VSEE…EDEE). A compositionally biased stretch (basic and acidic residues) spans 364–377 (MDKQRQKRMQEQRQ). Low complexity predominate over residues 398–415 (PRSSPYTSPKSSPWSSPK). The span at 425-450 (SQPPAPAPPPPPPPPPPPPPPPPPVI) shows a compositional bias: pro residues. Basic residues predominate over residues 478–488 (QKKKKGKKGKK). Residues 489–513 (HENSILKEIKDSLKSVSDRKSEEGS) show a composition bias toward basic and acidic residues. Residues 514–524 (RPSTRPSTPQR) show a composition bias toward polar residues. Positions 526-545 (LHDNLMEAIRASSIKQLRRV) are interaction with actin 3. Positions 526–545 (LHDNLMEAIRASSIKQLRRV) constitute a WH2 domain.

This sequence belongs to the tropomodulin family. Can bind at least three actin monomers and thereby provides a nucleus for actin filament formation. Interacts (via N-terminus) with tropomyosin alpha (TPM1) (via N-terminus). May also interact with TPM2 (via N-terminus).

The protein resides in the cytoplasm. It localises to the myofibril. It is found in the sarcomere. The protein localises to the m line. Its subcellular location is the cytoskeleton. Its function is as follows. Mediates nucleation of actin filaments and thereby promotes actin polymerization. Plays a role in the regulation of actin filament length. Required for normal sarcomere organization in the heart, and for normal heart function. This chain is Leiomodin-2 (LMOD2), found in Gallus gallus (Chicken).